Consider the following 551-residue polypeptide: Dihydroxy-acid dehydratase (551 aa).

Mg(2+) is bound at residue Asp78. Cys119 contributes to the [2Fe-2S] cluster binding site. Residues Asp120 and Lys121 each coordinate Mg(2+). Position 121 is an N6-carboxylysine (Lys121). Cys191 is a binding site for [2Fe-2S] cluster. Glu442 contacts Mg(2+). Catalysis depends on Ser468, which acts as the Proton acceptor.

Belongs to the IlvD/Edd family. As to quaternary structure, homodimer. [2Fe-2S] cluster is required as a cofactor. Mg(2+) serves as cofactor.

The enzyme catalyses (2R)-2,3-dihydroxy-3-methylbutanoate = 3-methyl-2-oxobutanoate + H2O. It catalyses the reaction (2R,3R)-2,3-dihydroxy-3-methylpentanoate = (S)-3-methyl-2-oxopentanoate + H2O. It participates in amino-acid biosynthesis; L-isoleucine biosynthesis; L-isoleucine from 2-oxobutanoate: step 3/4. The protein operates within amino-acid biosynthesis; L-valine biosynthesis; L-valine from pyruvate: step 3/4. Its function is as follows. Functions in the biosynthesis of branched-chain amino acids. Catalyzes the dehydration of (2R,3R)-2,3-dihydroxy-3-methylpentanoate (2,3-dihydroxy-3-methylvalerate) into 2-oxo-3-methylpentanoate (2-oxo-3-methylvalerate) and of (2R)-2,3-dihydroxy-3-methylbutanoate (2,3-dihydroxyisovalerate) into 2-oxo-3-methylbutanoate (2-oxoisovalerate), the penultimate precursor to L-isoleucine and L-valine, respectively. In Halothermothrix orenii (strain H 168 / OCM 544 / DSM 9562), this protein is Dihydroxy-acid dehydratase.